A 239-amino-acid chain; its full sequence is tRNA (guanine-N(7)-)-methyltransferase (239 aa).

Positions 69, 94, 121, and 144 each coordinate S-adenosyl-L-methionine. D144 is a catalytic residue. Residues K148, D180, and 217–220 each bind substrate; that span reads TKFE.

The protein belongs to the class I-like SAM-binding methyltransferase superfamily. TrmB family.

It carries out the reaction guanosine(46) in tRNA + S-adenosyl-L-methionine = N(7)-methylguanosine(46) in tRNA + S-adenosyl-L-homocysteine. Its pathway is tRNA modification; N(7)-methylguanine-tRNA biosynthesis. Its function is as follows. Catalyzes the formation of N(7)-methylguanine at position 46 (m7G46) in tRNA. This is tRNA (guanine-N(7)-)-methyltransferase from Alcanivorax borkumensis (strain ATCC 700651 / DSM 11573 / NCIMB 13689 / SK2).